Reading from the N-terminus, the 263-residue chain is 3-methyl-2-oxobutanoate hydroxymethyltransferase (263 aa).

Mg(2+) is bound by residues Asp45 and Asp84. 3-methyl-2-oxobutanoate contacts are provided by residues 45-46 (DS), Asp84, and Lys112. Glu114 contacts Mg(2+). Residue Glu181 is the Proton acceptor of the active site.

This sequence belongs to the PanB family. In terms of assembly, homodecamer; pentamer of dimers. It depends on Mg(2+) as a cofactor.

It localises to the cytoplasm. The catalysed reaction is 3-methyl-2-oxobutanoate + (6R)-5,10-methylene-5,6,7,8-tetrahydrofolate + H2O = 2-dehydropantoate + (6S)-5,6,7,8-tetrahydrofolate. The protein operates within cofactor biosynthesis; (R)-pantothenate biosynthesis; (R)-pantoate from 3-methyl-2-oxobutanoate: step 1/2. Catalyzes the reversible reaction in which hydroxymethyl group from 5,10-methylenetetrahydrofolate is transferred onto alpha-ketoisovalerate to form ketopantoate. This chain is 3-methyl-2-oxobutanoate hydroxymethyltransferase, found in Buchnera aphidicola subsp. Acyrthosiphon pisum (strain 5A).